Here is a 371-residue protein sequence, read N- to C-terminus: Probable cysteine protease RDL5 (371 aa).

The first 23 residues, 1–23, serve as a signal peptide directing secretion; that stretch reads MGYAKSAMLIFLLALVIASCATA. Residues 24–143 constitute a propeptide, activation peptide; that stretch reads MDMSVVSSND…NRYKTSDGDV (120 aa). N94 is a glycosylation site (N-linked (GlcNAc...) asparagine). Disulfide bonds link C165–C206, C199–C239, and C298–C349. Residue C168 is part of the active site. Residues H304 and N324 contribute to the active site.

Belongs to the peptidase C1 family. As to expression, expressed in roots, inflorescences and siliques.

Its function is as follows. Possesses protease activity in vitro. The sequence is that of Probable cysteine protease RDL5 from Arabidopsis thaliana (Mouse-ear cress).